A 320-amino-acid chain; its full sequence is Malate dehydrogenase (320 aa).

Residues 10–15 (GSGMIG) and Asp34 each bind NAD(+). Substrate contacts are provided by Arg83 and Arg89. NAD(+) contacts are provided by residues Asn96 and 119–121 (ITN). Residues Asn121 and Arg152 each contribute to the substrate site. The active-site Proton acceptor is His176.

It belongs to the LDH/MDH superfamily. MDH type 3 family.

The catalysed reaction is (S)-malate + NAD(+) = oxaloacetate + NADH + H(+). In terms of biological role, catalyzes the reversible oxidation of malate to oxaloacetate. The polypeptide is Malate dehydrogenase (Hyphomonas neptunium (strain ATCC 15444)).